The primary structure comprises 231 residues: Probable septum site-determining protein MinC (231 aa).

Positions 102 to 125 (KEKAPRPAPAPQAPAQNTTPVTKT) are disordered.

It belongs to the MinC family. In terms of assembly, interacts with MinD and FtsZ.

Its function is as follows. Cell division inhibitor that blocks the formation of polar Z ring septums. Rapidly oscillates between the poles of the cell to destabilize FtsZ filaments that have formed before they mature into polar Z rings. Prevents FtsZ polymerization. This is Probable septum site-determining protein MinC from Escherichia coli O139:H28 (strain E24377A / ETEC).